A 246-amino-acid polypeptide reads, in one-letter code: C-X-C motif chemokine 16 (246 aa).

Positions 1–26 (MRRGFGPLSLAFFLFLLALLTLPGDG) are cleaved as a signal peptide. The Extracellular portion of the chain corresponds to 27–201 (NQGSVAGSCS…PGAGASTPAW (175 aa)). 2 cysteine pairs are disulfide-bonded: Cys-35–Cys-65 and Cys-37–Cys-79. 2 disordered regions span residues 104-150 (GKSF…SGAL) and 175-198 (PEAE…GAST). Over residues 128–146 (PSDTSTPAHSQSTQHSTLP) the composition is skewed to polar residues. Positions 175–189 (PEAEANEKQQDDRQQ) are enriched in basic and acidic residues. The chain crosses the membrane as a helical span at residues 202 to 222 (VPVLSLLAIVFFLTAAMAYVL). At 223 to 246 (CNRRATQQNSAGLQLWYTPVEPRP) the chain is on the cytoplasmic side.

Belongs to the intercrine alpha (chemokine CxC) family. In terms of processing, glycosylated. Widely expressed. Not detected in purified B- and T-cells.

It localises to the membrane. Induces a strong chemotactic response. Induces calcium mobilization. Binds to CXCR6/Bonzo. Also acts as a scavenger receptor on macrophages, which specifically binds to OxLDL (oxidized low density lipoprotein), suggesting that it may be involved in pathophysiology such as atherogenesis. The sequence is that of C-X-C motif chemokine 16 (Cxcl16) from Mus musculus (Mouse).